A 61-amino-acid polypeptide reads, in one-letter code: Small ribosomal subunit protein uS14B (61 aa).

Zn(2+) is bound by residues Cys-24, Cys-27, Cys-40, and Cys-43.

The protein belongs to the universal ribosomal protein uS14 family. Zinc-binding uS14 subfamily. In terms of assembly, part of the 30S ribosomal subunit. Contacts proteins S3 and S10. It depends on Zn(2+) as a cofactor.

Its function is as follows. Binds 16S rRNA, required for the assembly of 30S particles and may also be responsible for determining the conformation of the 16S rRNA at the A site. The chain is Small ribosomal subunit protein uS14B from Pediococcus pentosaceus (strain ATCC 25745 / CCUG 21536 / LMG 10740 / 183-1w).